Reading from the N-terminus, the 223-residue chain is Germin-like protein 1-3 (223 aa).

The first 22 residues, 1–22, serve as a signal peptide directing secretion; the sequence is MAKLILATFAVVFMALAATSLA. Cys32 and Cys50 form a disulfide bridge. Asn55 is a glycosylation site (N-linked (GlcNAc...) asparagine). The region spanning 64-212 is the Cupin type-1 domain; that stretch reads DGLMKAGNTG…AFQVDGGMVE (149 aa). Mn(2+) is bound by residues His112, His114, Glu119, and His158.

It belongs to the germin family. As to quaternary structure, oligomer (believed to be a pentamer but probably hexamer).

The protein resides in the secreted. Its subcellular location is the extracellular space. The protein localises to the apoplast. Functionally, may play a role in plant defense. Probably has no oxalate oxidase activity even if the active site is conserved. The polypeptide is Germin-like protein 1-3 (GER8) (Oryza sativa subsp. japonica (Rice)).